The following is a 215-amino-acid chain: Cytochrome c biogenesis ATP-binding export protein CcmA (215 aa).

One can recognise an ABC transporter domain in the interval 7–209 (LKIDRLACQR…ALTVLNLAQY (203 aa)). Position 39 to 46 (39 to 46 (GHNGIGKT)) interacts with ATP.

Belongs to the ABC transporter superfamily. CcmA exporter (TC 3.A.1.107) family. The complex is composed of two ATP-binding proteins (CcmA) and two transmembrane proteins (CcmB).

The protein localises to the cell inner membrane. It catalyses the reaction heme b(in) + ATP + H2O = heme b(out) + ADP + phosphate + H(+). Part of the ABC transporter complex CcmAB involved in the biogenesis of c-type cytochromes; once thought to export heme, this seems not to be the case, but its exact role is uncertain. Responsible for energy coupling to the transport system. This chain is Cytochrome c biogenesis ATP-binding export protein CcmA, found in Mannheimia succiniciproducens (strain KCTC 0769BP / MBEL55E).